A 506-amino-acid polypeptide reads, in one-letter code: Histidine--tRNA ligase (506 aa).

The protein belongs to the class-II aminoacyl-tRNA synthetase family. As to quaternary structure, homodimer.

It localises to the cytoplasm. The enzyme catalyses tRNA(His) + L-histidine + ATP = L-histidyl-tRNA(His) + AMP + diphosphate + H(+). This chain is Histidine--tRNA ligase (hisS), found in Bradyrhizobium diazoefficiens (strain JCM 10833 / BCRC 13528 / IAM 13628 / NBRC 14792 / USDA 110).